The sequence spans 273 residues: Eukaryotic translation initiation factor 3 subunit J (273 aa).

A disordered region spans residues 1–158 (MPTKKWEDEE…DPSDPSKTVE (158 aa)). Acidic residues predominate over residues 34-54 (DEEANDSDVLDSWDAAEDSEV). Residues 50-97 (EDSEVEREKAKKAAEAKAKAEAEAKANKKTKAARINEHKQRRKEAEES) adopt a coiled-coil conformation. Basic and acidic residues predominate over residues 55–75 (EREKAKKAAEAKAKAEAEAKA). Residues 95–104 (EESDESDDET) are compositionally biased toward acidic residues. Over residues 105–126 (ESQRRERLRRTEKEADLAHAED) the composition is skewed to basic and acidic residues.

This sequence belongs to the eIF-3 subunit J family. Component of the eukaryotic translation initiation factor 3 (eIF-3) complex.

The protein resides in the cytoplasm. Functionally, component of the eukaryotic translation initiation factor 3 (eIF-3) complex, which is involved in protein synthesis of a specialized repertoire of mRNAs and, together with other initiation factors, stimulates binding of mRNA and methionyl-tRNAi to the 40S ribosome. The eIF-3 complex specifically targets and initiates translation of a subset of mRNAs involved in cell proliferation. This Pyricularia oryzae (strain 70-15 / ATCC MYA-4617 / FGSC 8958) (Rice blast fungus) protein is Eukaryotic translation initiation factor 3 subunit J.